The sequence spans 388 residues: Nesprin-4 (388 aa).

Over 1–339 (MALVPPLGRE…GVPAPASKRP (339 aa)) the chain is Cytoplasmic. The segment at 60-92 (ELKSTESATSPSRLPLASSHEHQDGGKPCEHSD) is disordered. Positions 78-92 (SHEHQDGGKPCEHSD) are enriched in basic and acidic residues. In terms of domain architecture, KASH spans 331-388 (VPAPASKRPLTLFFLLLFLLLVGATLLLPLSGVSCCSHARLARTPYLVLSYVNGLPPI). The helical; Anchor for type IV membrane protein transmembrane segment at 340–360 (LTLFFLLLFLLLVGATLLLPL) threads the bilayer. Topologically, residues 361-388 (SGVSCCSHARLARTPYLVLSYVNGLPPI) are perinuclear space.

This sequence belongs to the nesprin family. In terms of assembly, core component of LINC complexes which are composed of inner nuclear membrane SUN domain-containing proteins coupled to outer nuclear membrane KASH domain-containing nesprins. SUN and KASH domain-containing proteins seem to bind each other promiscuously; however, differentially expression of LINC complex constituents can give rise to specific assemblies. Probably part of a SUN1-containing LINC complex. Interacts with kinesins KIF5B and KLC1. In terms of processing, the disulfid bond with SUN1 or SUN2 is required for stability of the respective LINC complex under tensile forces. In terms of tissue distribution, expressed in secretory epithelial cells, such as those found in exocrine pancreas, bulbourethral gland, mammary gland and salivary gland (at protein level). Also expressed in the cochlea, where it is restricted primarily to the 3 rows of outer hair cells and 1 row of inner hair cells (at protein level). Not detected in other cells of the cochlea, including Deiter's cells and pillar cells, nor in liver and kidney (at protein level).

Its subcellular location is the nucleus outer membrane. Its function is as follows. As a component of the LINC (LInker of Nucleoskeleton and Cytoskeleton) complex, involved in the connection between the nuclear lamina and the cytoskeleton. The nucleocytoplasmic interactions established by the LINC complex play an important role in the transmission of mechanical forces across the nuclear envelope and in nuclear movement and positioning. Behaves as a kinesin cargo, providing a functional binding site for kinesin-1 at the nuclear envelope. Hence may contribute to the establishment of secretory epithelial morphology, by promoting kinesin-dependent apical migration of the centrosome and Golgi apparatus and basal localization of the nucleus. In Mus musculus (Mouse), this protein is Nesprin-4 (Syne4).